We begin with the raw amino-acid sequence, 268 residues long: Protein CDV3 homolog (268 aa).

Basic and acidic residues predominate over residues 40–50 (KREVVKPKKPE). Disordered stretches follow at residues 40–145 (KREV…ERVG) and 184–268 (QQAG…DEAS). Over residues 51-61 (AAAGGVAVVGE) the composition is skewed to low complexity. The span at 76-85 (VEEEWKEFEE) shows a compositional bias: acidic residues. The segment covering 98 to 107 (QLSTITAQES) has biased composition (polar residues). A compositionally biased stretch (acidic residues) spans 123–132 (NYDEDDEDSN). Residues 221 to 239 (RPEEQRKKKNEPAFEEVRH) are compositionally biased toward basic and acidic residues.

Belongs to the CDV3 family.

This Drosophila yakuba (Fruit fly) protein is Protein CDV3 homolog.